Reading from the N-terminus, the 218-residue chain is Ras-related protein R-Ras (218 aa).

Residues 1–30 form a disordered region; sequence MSSGAASGTGRGRPRGGGPGPRDPPPGETH. The segment covering 7–20 has biased composition (gly residues); sequence SGTGRGRPRGGGPG. A GTP-binding site is contributed by 36–44; that stretch reads GGGGVGKSA. Residues 58-66 carry the Effector region motif; sequence YDPTIEDSY. Residues 83 to 87, 142 to 145, and 172 to 174 each bind GTP; these read DTAGQ, NKAD, and SAK. A Cysteine methyl ester modification is found at Cys215. A lipid anchor (S-geranylgeranyl cysteine) is attached at Cys215. Positions 216-218 are cleaved as a propeptide — removed in mature form; that stretch reads VLL.

It belongs to the small GTPase superfamily. Ras family. As to quaternary structure, interacts with PLCE1. Interacts (active GTP-bound form preferentially) with RGS14. Interacts with OSBPL3. Interacts with ZDHHC19. Post-translationally, S-palmitoylated by ZDHHC19, leading to increased association with membranes and with rafts/caveolae as well as enhanced cell viability.

It localises to the cell membrane. The catalysed reaction is GTP + H2O = GDP + phosphate + H(+). Its function is as follows. GTP-binding protein with GTPase activity, likely involved in the regulation of MAPK signaling pathway and thereby controlling multiple cellular processes. Regulates the organization of the actin cytoskeleton. With OSPBL3, modulates integrin beta-1 (ITGB1) activity. The protein is Ras-related protein R-Ras (Rras) of Rattus norvegicus (Rat).